A 139-amino-acid polypeptide reads, in one-letter code: uncharacterized protein (139 aa).

This is an uncharacterized protein from Saccharomyces cerevisiae (strain ATCC 204508 / S288c) (Baker's yeast).